Here is a 270-residue protein sequence, read N- to C-terminus: Shikimate dehydrogenase (NADP(+)) (270 aa).

Shikimate-binding positions include 14 to 16 (SKS) and Thr-61. The active-site Proton acceptor is Lys-65. Shikimate is bound by residues Asn-86 and Asp-101. NADP(+) contacts are provided by residues 126–130 (GAGGA), 150–155 (NRTVDK), and Met-215. Residue Tyr-217 participates in shikimate binding. NADP(+) is bound at residue Gly-238.

It belongs to the shikimate dehydrogenase family. In terms of assembly, homodimer.

The enzyme catalyses shikimate + NADP(+) = 3-dehydroshikimate + NADPH + H(+). The protein operates within metabolic intermediate biosynthesis; chorismate biosynthesis; chorismate from D-erythrose 4-phosphate and phosphoenolpyruvate: step 4/7. Involved in the biosynthesis of the chorismate, which leads to the biosynthesis of aromatic amino acids. Catalyzes the reversible NADPH linked reduction of 3-dehydroshikimate (DHSA) to yield shikimate (SA). The sequence is that of Shikimate dehydrogenase (NADP(+)) from Methylobacillus flagellatus (strain ATCC 51484 / DSM 6875 / VKM B-1610 / KT).